Here is a 373-residue protein sequence, read N- to C-terminus: ATP phosphoribosyltransferase regulatory subunit (373 aa).

Belongs to the class-II aminoacyl-tRNA synthetase family. HisZ subfamily. In terms of assembly, heteromultimer composed of HisG and HisZ subunits.

The protein localises to the cytoplasm. Its pathway is amino-acid biosynthesis; L-histidine biosynthesis; L-histidine from 5-phospho-alpha-D-ribose 1-diphosphate: step 1/9. Functionally, required for the first step of histidine biosynthesis. May allow the feedback regulation of ATP phosphoribosyltransferase activity by histidine. This is ATP phosphoribosyltransferase regulatory subunit from Rhizobium leguminosarum bv. trifolii (strain WSM2304).